The following is a 105-amino-acid chain: Small ribosomal subunit protein uS10 (105 aa).

This sequence belongs to the universal ribosomal protein uS10 family. In terms of assembly, part of the 30S ribosomal subunit.

Functionally, involved in the binding of tRNA to the ribosomes. This is Small ribosomal subunit protein uS10 from Anaplasma marginale (strain Florida).